A 519-amino-acid polypeptide reads, in one-letter code: Serine/threonine-protein kinase RIO3 (519 aa).

S8 and S112 each carry phosphoserine. Residues 121-159 (PYEDSDSSEDEVDWQDTRDDPYRPAKPVPTPKKGFIGKG) form a disordered region. At Y122 the chain carries Phosphotyrosine. Over residues 124–134 (DSDSSEDEVDW) the composition is skewed to acidic residues. Phosphoserine is present on residues S125, S127, and S128. Residues 251–519 (ETITGCISTG…DGDPPLLYDE (269 aa)) enclose the Protein kinase domain. ATP contacts are provided by residues 257-265 (ISTGKESVV) and K290. The Proton acceptor role is filled by D406.

Belongs to the protein kinase superfamily. RIO-type Ser/Thr kinase family. In terms of assembly, interacts with CASP10. Interacts with IRF3; RIOK3 probably mediates the interaction of TBK1 with IRF3. Associated with 40S pre-ribosomal particles. Mg(2+) serves as cofactor. Post-translationally, autophosphorylated (in vitro). In terms of tissue distribution, widely expressed.

The protein localises to the cytoplasm. It carries out the reaction L-seryl-[protein] + ATP = O-phospho-L-seryl-[protein] + ADP + H(+). The catalysed reaction is L-threonyl-[protein] + ATP = O-phospho-L-threonyl-[protein] + ADP + H(+). Its function is as follows. Involved in regulation of type I interferon (IFN)-dependent immune response which plays a critical role in the innate immune response against DNA and RNA viruses. May act as an adapter protein essential for the recruitment of TBK1 to IRF3. Phosphorylates IFIH1 on 'Ser-828' interfering with IFIH1 filament assembly on long dsRNA and resulting in attenuated IFIH1-signaling. Can inhibit CASP10 isoform 7-mediated activation of the NF-kappaB signaling pathway. May play a role in the biogenesis of the 40S ribosomal subunit. Involved in the processing of 21S pre-rRNA to the mature 18S rRNA. In Homo sapiens (Human), this protein is Serine/threonine-protein kinase RIO3 (RIOK3).